The chain runs to 467 residues: Siroheme synthase 2 (467 aa).

The interval 1–204 (MDYLPIFCQL…NDVALAERQI (204 aa)) is precorrin-2 dehydrogenase /sirohydrochlorin ferrochelatase. NAD(+) is bound by residues 22 to 23 (EI) and 43 to 44 (CS). The residue at position 128 (Ser128) is a Phosphoserine. The uroporphyrinogen-III C-methyltransferase stretch occupies residues 216 to 467 (GEVVLVGAGP…EPSQPLAQMA (252 aa)). An S-adenosyl-L-methionine-binding site is contributed by Pro225. The active-site Proton acceptor is Asp248. Lys270 (proton donor) is an active-site residue. Residues 301–303 (GGD), Ile306, 331–332 (TA), Met382, and Gly411 each bind S-adenosyl-L-methionine.

This sequence in the N-terminal section; belongs to the precorrin-2 dehydrogenase / sirohydrochlorin ferrochelatase family. It in the C-terminal section; belongs to the precorrin methyltransferase family.

The enzyme catalyses uroporphyrinogen III + 2 S-adenosyl-L-methionine = precorrin-2 + 2 S-adenosyl-L-homocysteine + H(+). The catalysed reaction is precorrin-2 + NAD(+) = sirohydrochlorin + NADH + 2 H(+). It catalyses the reaction siroheme + 2 H(+) = sirohydrochlorin + Fe(2+). It participates in cofactor biosynthesis; adenosylcobalamin biosynthesis; precorrin-2 from uroporphyrinogen III: step 1/1. The protein operates within cofactor biosynthesis; adenosylcobalamin biosynthesis; sirohydrochlorin from precorrin-2: step 1/1. It functions in the pathway porphyrin-containing compound metabolism; siroheme biosynthesis; precorrin-2 from uroporphyrinogen III: step 1/1. Its pathway is porphyrin-containing compound metabolism; siroheme biosynthesis; siroheme from sirohydrochlorin: step 1/1. It participates in porphyrin-containing compound metabolism; siroheme biosynthesis; sirohydrochlorin from precorrin-2: step 1/1. Its function is as follows. Multifunctional enzyme that catalyzes the SAM-dependent methylations of uroporphyrinogen III at position C-2 and C-7 to form precorrin-2 via precorrin-1. Then it catalyzes the NAD-dependent ring dehydrogenation of precorrin-2 to yield sirohydrochlorin. Finally, it catalyzes the ferrochelation of sirohydrochlorin to yield siroheme. The polypeptide is Siroheme synthase 2 (Serratia proteamaculans (strain 568)).